The sequence spans 662 residues: Retaining alpha-galactosidase (662 aa).

Positions 1 to 19 (MKKLTFLLLCVLCTLSLQA) are cleaved as a signal peptide. Position 174 (Glu-174) interacts with Ca(2+). Asp-415 acts as the Nucleophile in catalysis. Ca(2+) is bound by residues Glu-464 and Glu-470. Glu-470 functions as the Proton donor/acceptor in the catalytic mechanism.

The protein belongs to the glycosyl hydrolase 97 family. As to quaternary structure, monomer. Ca(2+) serves as cofactor.

The catalysed reaction is Hydrolysis of terminal, non-reducing alpha-D-galactose residues in alpha-D-galactosides, including galactose oligosaccharides, galactomannans and galactolipids.. With respect to regulation, inhibited by EDTA in vitro. Its function is as follows. Galactosidase that is able to hydrolyze the alpha-1,6 disaccharide melibiose and the synthetic p-nitrophenyl alpha-galactoside substrate (pNP-Gal), with retention of the anomeric configuration. Does not hydrolyze DNP-Glc or pNP-Glc. In Bacteroides thetaiotaomicron (strain ATCC 29148 / DSM 2079 / JCM 5827 / CCUG 10774 / NCTC 10582 / VPI-5482 / E50), this protein is Retaining alpha-galactosidase.